The sequence spans 788 residues: Endonuclease MutS2 (788 aa).

332-339 (GPNTGGKT) is a binding site for ATP. A Smr domain is found at 713–788 (VDLRGMDAEE…GTGVTVVEIK (76 aa)).

It belongs to the DNA mismatch repair MutS family. MutS2 subfamily. As to quaternary structure, homodimer. Binds to stalled ribosomes, contacting rRNA.

Endonuclease that is involved in the suppression of homologous recombination and thus may have a key role in the control of bacterial genetic diversity. In terms of biological role, acts as a ribosome collision sensor, splitting the ribosome into its 2 subunits. Detects stalled/collided 70S ribosomes which it binds and splits by an ATP-hydrolysis driven conformational change. Acts upstream of the ribosome quality control system (RQC), a ribosome-associated complex that mediates the extraction of incompletely synthesized nascent chains from stalled ribosomes and their subsequent degradation. Probably generates substrates for RQC. The polypeptide is Endonuclease MutS2 (Clostridium botulinum (strain 657 / Type Ba4)).